The primary structure comprises 1214 residues: Filamin-A-interacting protein 1 (1214 aa).

The segment covering 1–15 has biased composition (polar residues); that stretch reads MRSRNQGGESSSNGH. The segment at 1-73 is disordered; the sequence is MRSRNQGGES…ESEKKTKKPL (73 aa). 2 stretches are compositionally biased toward basic and acidic residues: residues 32 to 47 and 61 to 73; these read PSED…KGED and PSGE…KKPL. Ser-138 bears the Phosphoserine mark. Coiled-coil stretches lie at residues 192–581 and 624–778; these read DYMN…KLRS and PEDN…ELEL. 2 disordered regions span residues 875-898 and 949-976; these read KREN…GHPG and KPRI…GPER. A Phosphoserine modification is found at Ser-979. The segment at 1104–1192 is disordered; sequence VSTGTVLRSP…TKFQPRAETQ (89 aa). Low complexity predominate over residues 1126–1140; sequence VTSTITITPVTTSST. A compositionally biased stretch (polar residues) spans 1141–1157; the sequence is RGTQSVSGQDGSSQRPT. The span at 1169-1180 shows a compositional bias: low complexity; sequence AGKPVVAAPGAG.

This sequence belongs to the FILIP1 family. Interacts with FLNA. Interacts with RHOD (in GTP-bound form).

It localises to the cytoplasm. Its subcellular location is the cytoskeleton. In terms of biological role, by acting through a filamin-A/F-actin axis, it controls the start of neocortical cell migration from the ventricular zone. May be able to induce the degradation of filamin-A. The chain is Filamin-A-interacting protein 1 (Filip1) from Mus musculus (Mouse).